We begin with the raw amino-acid sequence, 166 residues long: Urease accessory protein UreE (166 aa).

The interval 135–156 (EQGAYGGGHHHSHHGDEEFNYG) is disordered.

Belongs to the UreE family.

The protein localises to the cytoplasm. Its function is as follows. Involved in urease metallocenter assembly. Binds nickel. Probably functions as a nickel donor during metallocenter assembly. The sequence is that of Urease accessory protein UreE from Ectopseudomonas mendocina (strain ymp) (Pseudomonas mendocina).